Consider the following 76-residue polypeptide: Large ribosomal subunit protein bL31 (76 aa).

Belongs to the bacterial ribosomal protein bL31 family. Type A subfamily. In terms of assembly, part of the 50S ribosomal subunit.

Binds the 23S rRNA. The chain is Large ribosomal subunit protein bL31 from Beijerinckia indica subsp. indica (strain ATCC 9039 / DSM 1715 / NCIMB 8712).